Reading from the N-terminus, the 110-residue chain is MEWGPGAGWSRGEAAGVDRGKAGLGLGGRPPPQPPRDERAQQLLDAVEQRQRQLLDTIAACEEMLRQLGRRRPEPAGGGNGSAKSGAPPQPSVSARGGLPKDAGDGASES.

Disordered stretches follow at residues 1 to 41 (MEWG…ERAQ) and 65 to 110 (LRQL…ASES). Residues 38–68 (ERAQQLLDAVEQRQRQLLDTIAACEEMLRQL) are a coiled coil.

This is an uncharacterized protein from Mus musculus (Mouse).